A 133-amino-acid polypeptide reads, in one-letter code: Small ribosomal subunit protein eS24z (133 aa).

Residues 104 to 133 (KSRKQIKERKNRAKKIRGVKKTKAGDAKKK) are disordered. The span at 109 to 125 (IKERKNRAKKIRGVKKT) shows a compositional bias: basic residues.

The protein belongs to the eukaryotic ribosomal protein eS24 family.

The protein is Small ribosomal subunit protein eS24z (RPS24A) of Arabidopsis thaliana (Mouse-ear cress).